Reading from the N-terminus, the 577-residue chain is 9-cis-epoxycarotenoid dioxygenase NCED6, chloroplastic (577 aa).

The disordered stretch occupies residues 1–25 (MQHSLRSDLLPTKTSPRSHLLPQPK). The Fe cation site is built by His276, His325, His390, and His563.

This sequence belongs to the carotenoid oxygenase family. Requires Fe(2+) as cofactor. In terms of tissue distribution, expressed before fertilization in male and female gametophytes, and then immediately after pollination, restricted to seed endosperm.

The protein localises to the plastid. It localises to the chloroplast stroma. It catalyses the reaction a 9-cis-epoxycarotenoid + O2 = a 12'-apo-carotenal + 2-cis,4-trans-xanthoxin. It carries out the reaction 9-cis-violaxanthin + O2 = (3S,5R,6S)-5,6-epoxy-3-hydroxy-5,6-dihydro-12'-apo-beta-caroten-12'-al + 2-cis,4-trans-xanthoxin. The enzyme catalyses 9'-cis-neoxanthin + O2 = (3S,5R,6R)-3,5-dihydroxy-6,7-didehydro-5,6-dihydro-12'-apo-beta-caroten-12'-al + 2-cis,4-trans-xanthoxin. Its function is as follows. Has a 11,12(11',12') 9-cis epoxycarotenoid cleavage activity. Catalyzes the first step of abscisic-acid biosynthesis from carotenoids. Contributes probably to abscisic acid synthesis for the induction of seed dormancy. In Arabidopsis thaliana (Mouse-ear cress), this protein is 9-cis-epoxycarotenoid dioxygenase NCED6, chloroplastic (NCED6).